A 149-amino-acid polypeptide reads, in one-letter code: SsrA-binding protein (149 aa).

Residues 123 to 149 are disordered; it reads KQFDKRETEKQRDWQREKARIMKGGKE.

It belongs to the SmpB family.

The protein resides in the cytoplasm. Required for rescue of stalled ribosomes mediated by trans-translation. Binds to transfer-messenger RNA (tmRNA), required for stable association of tmRNA with ribosomes. tmRNA and SmpB together mimic tRNA shape, replacing the anticodon stem-loop with SmpB. tmRNA is encoded by the ssrA gene; the 2 termini fold to resemble tRNA(Ala) and it encodes a 'tag peptide', a short internal open reading frame. During trans-translation Ala-aminoacylated tmRNA acts like a tRNA, entering the A-site of stalled ribosomes, displacing the stalled mRNA. The ribosome then switches to translate the ORF on the tmRNA; the nascent peptide is terminated with the 'tag peptide' encoded by the tmRNA and targeted for degradation. The ribosome is freed to recommence translation, which seems to be the essential function of trans-translation. The chain is SsrA-binding protein from Cupriavidus taiwanensis (strain DSM 17343 / BCRC 17206 / CCUG 44338 / CIP 107171 / LMG 19424 / R1) (Ralstonia taiwanensis (strain LMG 19424)).